The primary structure comprises 514 residues: Type-2 serine--tRNA ligase (514 aa).

Residue alanine 313 participates in L-serine binding. Position 315 (cysteine 315) interacts with Zn(2+). Residue arginine 344 participates in L-serine binding. ATP is bound by residues 344–346 (RWE) and 355–356 (RV). 361–363 (RGE) is an L-serine binding site. Glutamate 363 and cysteine 470 together coordinate Zn(2+). Residue arginine 477 coordinates ATP.

The protein belongs to the class-II aminoacyl-tRNA synthetase family. Type-2 seryl-tRNA synthetase subfamily. In terms of assembly, homodimer. Requires Zn(2+) as cofactor.

The protein localises to the cytoplasm. It carries out the reaction tRNA(Ser) + L-serine + ATP = L-seryl-tRNA(Ser) + AMP + diphosphate + H(+). The catalysed reaction is tRNA(Sec) + L-serine + ATP = L-seryl-tRNA(Sec) + AMP + diphosphate + H(+). The protein operates within aminoacyl-tRNA biosynthesis; selenocysteinyl-tRNA(Sec) biosynthesis; L-seryl-tRNA(Sec) from L-serine and tRNA(Sec): step 1/1. Its function is as follows. Catalyzes the attachment of serine to tRNA(Ser). Is also able to aminoacylate tRNA(Sec) with serine, to form the misacylated tRNA L-seryl-tRNA(Sec), which will be further converted into selenocysteinyl-tRNA(Sec). The protein is Type-2 serine--tRNA ligase of Methanococcus maripaludis (strain C7 / ATCC BAA-1331).